A 254-amino-acid polypeptide reads, in one-letter code: Thiazole synthase (254 aa).

K93 functions as the Schiff-base intermediate with DXP in the catalytic mechanism. 1-deoxy-D-xylulose 5-phosphate contacts are provided by residues G154, 181–182 (AG), and 203–204 (NT).

This sequence belongs to the ThiG family. Homotetramer. Forms heterodimers with either ThiH or ThiS.

It localises to the cytoplasm. It carries out the reaction [ThiS sulfur-carrier protein]-C-terminal-Gly-aminoethanethioate + 2-iminoacetate + 1-deoxy-D-xylulose 5-phosphate = [ThiS sulfur-carrier protein]-C-terminal Gly-Gly + 2-[(2R,5Z)-2-carboxy-4-methylthiazol-5(2H)-ylidene]ethyl phosphate + 2 H2O + H(+). Its pathway is cofactor biosynthesis; thiamine diphosphate biosynthesis. Functionally, catalyzes the rearrangement of 1-deoxy-D-xylulose 5-phosphate (DXP) to produce the thiazole phosphate moiety of thiamine. Sulfur is provided by the thiocarboxylate moiety of the carrier protein ThiS. In vitro, sulfur can be provided by H(2)S. The polypeptide is Thiazole synthase (Ruegeria pomeroyi (strain ATCC 700808 / DSM 15171 / DSS-3) (Silicibacter pomeroyi)).